The following is a 350-amino-acid chain: Arabinogalactan endo-beta-1,4-galactanase A (350 aa).

Residues 1–16 form the signal peptide; the sequence is MIYPLLLSALPLLSSA. N-linked (GlcNAc...) asparagine glycosylation occurs at Asn128. Glu152 acts as the Proton donor in catalysis. Glu262 serves as the catalytic Nucleophile.

Belongs to the glycosyl hydrolase 53 family.

The protein resides in the secreted. It carries out the reaction The enzyme specifically hydrolyzes (1-&gt;4)-beta-D-galactosidic linkages in type I arabinogalactans.. In terms of biological role, endogalactanase involved in the degradation of plant cell wall polysaccharides, and more particularly of hairy regions of pectin. The polypeptide is Arabinogalactan endo-beta-1,4-galactanase A (galA) (Aspergillus niger).